The following is a 221-amino-acid chain: 7-cyano-7-deazaguanine synthase (221 aa).

9–19 (YSGGMDSFTVL) contributes to the ATP binding site. Zn(2+) is bound by residues cysteine 186, cysteine 194, cysteine 197, and cysteine 200.

This sequence belongs to the QueC family. Zn(2+) serves as cofactor.

It catalyses the reaction 7-carboxy-7-deazaguanine + NH4(+) + ATP = 7-cyano-7-deazaguanine + ADP + phosphate + H2O + H(+). Its pathway is purine metabolism; 7-cyano-7-deazaguanine biosynthesis. Its function is as follows. Catalyzes the ATP-dependent conversion of 7-carboxy-7-deazaguanine (CDG) to 7-cyano-7-deazaguanine (preQ(0)). The protein is 7-cyano-7-deazaguanine synthase of Psychromonas ingrahamii (strain DSM 17664 / CCUG 51855 / 37).